Here is a 503-residue protein sequence, read N- to C-terminus: Glycerol kinase (503 aa).

Thr-17 lines the ADP pocket. The ATP site is built by Thr-17, Thr-18, and Ser-19. Thr-17 is a sn-glycerol 3-phosphate binding site. An ADP-binding site is contributed by Arg-21. Residues Arg-87, Glu-88, Tyr-141, and Asp-245 each coordinate sn-glycerol 3-phosphate. Residues Arg-87, Glu-88, Tyr-141, Asp-245, and Gln-246 each coordinate glycerol. The ADP site is built by Thr-267 and Gly-310. Thr-267, Gly-310, Gln-314, and Gly-411 together coordinate ATP. ADP is bound by residues Gly-411 and Asn-415.

This sequence belongs to the FGGY kinase family.

It catalyses the reaction glycerol + ATP = sn-glycerol 3-phosphate + ADP + H(+). It functions in the pathway polyol metabolism; glycerol degradation via glycerol kinase pathway; sn-glycerol 3-phosphate from glycerol: step 1/1. Its activity is regulated as follows. Inhibited by fructose 1,6-bisphosphate (FBP). Its function is as follows. Key enzyme in the regulation of glycerol uptake and metabolism. Catalyzes the phosphorylation of glycerol to yield sn-glycerol 3-phosphate. The protein is Glycerol kinase of Pseudomonas tolaasii.